The chain runs to 540 residues: Ribonuclease Y (540 aa).

The helical transmembrane segment at 4–24 threads the bilayer; that stretch reads TILVPVAVAIVSVLVGGCAGY. The region spanning 230 to 293 is the KH domain; sequence TVSVVNLPSD…EIAKRALERL (64 aa). In terms of domain architecture, HD spans 356 to 449; that stretch reads VLSHSIEVGK…VVAADTISSA (94 aa).

Belongs to the RNase Y family.

It is found in the cell membrane. Endoribonuclease that initiates mRNA decay. The chain is Ribonuclease Y from Lactobacillus johnsonii (strain CNCM I-12250 / La1 / NCC 533).